An 88-amino-acid polypeptide reads, in one-letter code: Small ribosomal subunit protein uS17 (88 aa).

Belongs to the universal ribosomal protein uS17 family. As to quaternary structure, part of the 30S ribosomal subunit.

One of the primary rRNA binding proteins, it binds specifically to the 5'-end of 16S ribosomal RNA. The sequence is that of Small ribosomal subunit protein uS17 from Brevibacillus brevis (strain 47 / JCM 6285 / NBRC 100599).